The primary structure comprises 32 residues: Putative leucine-rich repeat protein PS14 (32 aa).

The protein is Putative leucine-rich repeat protein PS14 of Pinus strobus (Eastern white pine).